The following is a 208-amino-acid chain: 3-demethoxyubiquinol 3-hydroxylase (208 aa).

Residues Glu57, Glu87, His90, Glu139, Glu171, and His174 each contribute to the Fe cation site.

The protein belongs to the COQ7 family. It depends on Fe cation as a cofactor.

It is found in the cell membrane. The enzyme catalyses a 5-methoxy-2-methyl-3-(all-trans-polyprenyl)benzene-1,4-diol + AH2 + O2 = a 3-demethylubiquinol + A + H2O. It participates in cofactor biosynthesis; ubiquinone biosynthesis. Functionally, catalyzes the hydroxylation of 2-nonaprenyl-3-methyl-6-methoxy-1,4-benzoquinol during ubiquinone biosynthesis. The chain is 3-demethoxyubiquinol 3-hydroxylase from Janthinobacterium sp. (strain Marseille) (Minibacterium massiliensis).